A 376-amino-acid chain; its full sequence is Chaperone protein DnaJ (376 aa).

The 66-residue stretch at 5-70 (DYYEILGVSK…QKRAAYDQYG (66 aa)) folds into the J domain. The CR-type zinc finger occupies 131–209 (GVTKEIRIPT…CHGHGRVERS (79 aa)). Zn(2+) contacts are provided by C144, C147, C161, C164, C183, C186, C197, and C200. CXXCXGXG motif repeat units follow at residues 144–151 (CDVCHGSG), 161–168 (CPTCHGSG), 183–190 (CPHCQGRG), and 197–204 (CNKCHGHG).

Belongs to the DnaJ family. Homodimer. Zn(2+) serves as cofactor.

It is found in the cytoplasm. Functionally, participates actively in the response to hyperosmotic and heat shock by preventing the aggregation of stress-denatured proteins and by disaggregating proteins, also in an autonomous, DnaK-independent fashion. Unfolded proteins bind initially to DnaJ; upon interaction with the DnaJ-bound protein, DnaK hydrolyzes its bound ATP, resulting in the formation of a stable complex. GrpE releases ADP from DnaK; ATP binding to DnaK triggers the release of the substrate protein, thus completing the reaction cycle. Several rounds of ATP-dependent interactions between DnaJ, DnaK and GrpE are required for fully efficient folding. Also involved, together with DnaK and GrpE, in the DNA replication of plasmids through activation of initiation proteins. The chain is Chaperone protein DnaJ from Shigella boydii serotype 18 (strain CDC 3083-94 / BS512).